The chain runs to 930 residues: Isoleucine--tRNA ligase (930 aa).

The 'HIGH' region signature appears at 57 to 67 (PYANGNIHVGH). Glu554 is an L-isoleucyl-5'-AMP binding site. A 'KMSKS' region motif is present at residues 595–599 (KMSKS). Residue Lys598 coordinates ATP. Zn(2+) is bound by residues Cys888, Cys891, Cys908, and Cys911.

It belongs to the class-I aminoacyl-tRNA synthetase family. IleS type 1 subfamily. As to quaternary structure, monomer. Zn(2+) serves as cofactor.

The protein localises to the cytoplasm. The enzyme catalyses tRNA(Ile) + L-isoleucine + ATP = L-isoleucyl-tRNA(Ile) + AMP + diphosphate. Functionally, catalyzes the attachment of isoleucine to tRNA(Ile). As IleRS can inadvertently accommodate and process structurally similar amino acids such as valine, to avoid such errors it has two additional distinct tRNA(Ile)-dependent editing activities. One activity is designated as 'pretransfer' editing and involves the hydrolysis of activated Val-AMP. The other activity is designated 'posttransfer' editing and involves deacylation of mischarged Val-tRNA(Ile). The sequence is that of Isoleucine--tRNA ligase from Streptococcus pneumoniae (strain P1031).